The sequence spans 519 residues: Trichothecene 15-O-acetyltransferase TRI3 (519 aa).

A 15-deacetylcalonectrin-binding site is contributed by His414.

It belongs to the trichothecene O-acetyltransferase family.

Its pathway is sesquiterpene biosynthesis; trichothecene biosynthesis. 15-O-acetyltransferase; part of the core gene cluster that mediates the biosynthesis of trichothecenes, a very large family of chemically related bicyclic sesquiterpene compounds acting as mycotoxins, including T2-toxin. The biosynthesis of trichothecenes begins with the cyclization of farnesyl diphosphate to trichodiene and is catalyzed by the trichodiene synthase TRI5. Trichodiene undergoes a series of oxygenations catalyzed by the cytochrome P450 monooxygenase TRI4. TRI4 controls the addition of four oxygens at C-2, C-3, C-11, and the C-12, C-13-epoxide to form the intermediate isotrichotriol. Isotrichotriol then undergoes a non-enzymatic isomerization and cyclization to form isotrichodermol. During this process, the oxygen at the C-2 position becomes the pyran ring oxygen and the hydroxyl group at C-11 is lost. More complex type A trichothecenes are built by modifying isotrichodermol through a series of paired hydroxylation and acetylation or acylation steps. Isotrichodermol is converted to isotrichodermin by the acetyltransferase TRI101. TRI101 encodes a C-3 transacetylase that acts as a self-protection or resistance factor during biosynthesis and that the presence of a free C-3 hydroxyl group is a key component of Fusarium trichothecene phytotoxicity. A second hydroxyl group is added to C-15 by the trichothecene C-15 hydroxylase TRI11, producing 15-decalonectrin, which is then acetylated by TRI3, producing calonectrin. A third hydroxyl group is added at C-4 by the cytochrome P450 monooxygenase TRI13, converting calonectrin to 3,15-diacetoxyspirpenol, which is subsequently acetylated by the acetyltransferase TRI7. A fourth hydroxyl group is added to C-8 by the cytochrome P450 monooxygenase TRI1, followed by the addition of an isovaleryl moiety by TRI16. Finally, the acetyl group is removed from the C-3 position by the trichothecene C-3 esterase TRI8 to produce T-2 toxin. This is Trichothecene 15-O-acetyltransferase TRI3 from Fusarium sporotrichioides.